The primary structure comprises 403 residues: MNITGVIVEYNPFHNGHLYHLNKTKEITDCDGIVAVMSGHFVQRGSPALLDKWTRAKLALLNGVDLVLELPTIYSTSSAEFFAYGATSLLDGINIVNNLCFGSELGNIDIILKTSKILQEEPLSFKEDLKNFIDKGISFPNAREKALINFMRKGKNSFDFNNVLCLSNNILALEYCKNLFKINSNIKPFTVKRQGSHYNCLHLRDNLSSATAIREYIGNNENLDNLVKSVPETVLNMLKNFQNEQCKFPFEEDMFTYIKHKYFSNTGSIENLPDVSEGIHNRIYRALDTCNTLKEAMDMIKTKRYTYTRIKRILCHYFIGMDMINSDELRRKPCPYARILGFNRKGQDILKLIKKSSNIPIINKIPKKIDSTLNLDINATKCYSLLNKKVNPLDDFLKKPVLK.

ATP-binding positions include 7–20 (IVEYNPFHNGHLYH), glycine 102, asparagine 168, and arginine 193.

This sequence belongs to the TmcAL family.

It is found in the cytoplasm. It carries out the reaction cytidine(34) in elongator tRNA(Met) + acetate + ATP = N(4)-acetylcytidine(34) in elongator tRNA(Met) + AMP + diphosphate. Its function is as follows. Catalyzes the formation of N(4)-acetylcytidine (ac(4)C) at the wobble position of elongator tRNA(Met), using acetate and ATP as substrates. First activates an acetate ion to form acetyladenylate (Ac-AMP) and then transfers the acetyl group to tRNA to form ac(4)C34. The sequence is that of tRNA(Met) cytidine acetate ligase from Clostridium tetani (strain Massachusetts / E88).